The primary structure comprises 247 residues: Adenosylcobinamide-GDP ribazoletransferase (247 aa).

A run of 6 helical transmembrane segments spans residues 31–51, 57–77, 109–129, 136–156, 189–209, and 218–238; these read VVWF…AAAL, PWLG…GLHL, FGVI…HWLL, PALV…TLLL, ITPI…WMWL, and ILGA…GVSL.

The protein belongs to the CobS family. Mg(2+) serves as cofactor.

Its subcellular location is the cell inner membrane. The catalysed reaction is alpha-ribazole + adenosylcob(III)inamide-GDP = adenosylcob(III)alamin + GMP + H(+). It catalyses the reaction alpha-ribazole 5'-phosphate + adenosylcob(III)inamide-GDP = adenosylcob(III)alamin 5'-phosphate + GMP + H(+). The protein operates within cofactor biosynthesis; adenosylcobalamin biosynthesis; adenosylcobalamin from cob(II)yrinate a,c-diamide: step 7/7. Joins adenosylcobinamide-GDP and alpha-ribazole to generate adenosylcobalamin (Ado-cobalamin). Also synthesizes adenosylcobalamin 5'-phosphate from adenosylcobinamide-GDP and alpha-ribazole 5'-phosphate. This is Adenosylcobinamide-GDP ribazoletransferase from Thiobacillus denitrificans (strain ATCC 25259 / T1).